A 205-amino-acid chain; its full sequence is Guanylate kinase (205 aa).

One can recognise a Guanylate kinase-like domain in the interval 18 to 196; the sequence is PKLFIISAPA…AYQVLRSIFI (179 aa). 25–32 serves as a coordination point for ATP; sequence APAGAGKT.

This sequence belongs to the guanylate kinase family.

The protein localises to the cytoplasm. It carries out the reaction GMP + ATP = GDP + ADP. Its function is as follows. Essential for recycling GMP and indirectly, cGMP. The protein is Guanylate kinase (gmk) of Chlamydia trachomatis serovar D (strain ATCC VR-885 / DSM 19411 / UW-3/Cx).